The chain runs to 521 residues: MAAVATSFCFSPHRSPSRFGNPNSSIRRTIVCKSSPRDESPAVSTSSQRPEKQQNPLTSQNKPDHDHKPDPGIGKIGMEIMSIALPAALALAADPITSLVDTAFVGHIGSAELAAVGVSVSVFNLVSKLFNVPLLNVTTSFVAEEQAIAAKDDNDSIETSKKVLPSVSTSLVLAAGVGIAEAIALSLGSDFLMDVMAIPFDSPMRIPAEQFLRLRAYGAPPIVVALAAQGAFRGFKDTTTPLYAVVAGNVLNAVLDPILIFVLGFGISGAAAATVISEYLIAFILLWKLNENVVLLSPQIKVGRANQYLKSGGLLIGRTVALLVPFTLATSLAAQNGPTQMAGHQIVLEIWLAVSLLTDALAIAAQSLLATTYSQGEYKQAREVLFGVLQVGLATGTGLAAVLFITFEPFSSLFTTDSEVLKIALSGTLFVAGSQPVNALAFVLDGLYYGVSDFGFAAYSMVIVGFISSLFMLVAAPTFGLAGIWTGLFLFMALRLVAGAWRLGTRTGPWKMLWSAPEKPE.

The transit peptide at 1 to 31 (MAAVATSFCFSPHRSPSRFGNPNSSIRRTIV) directs the protein to the chloroplast. The segment at 12 to 73 (PHRSPSRFGN…DHDHKPDPGI (62 aa)) is disordered. Composition is skewed to polar residues over residues 18-27 (RFGNPNSSIR) and 42-61 (AVST…TSQN). 12 consecutive transmembrane segments (helical) span residues 80 to 100 (IMSI…TSLV), 103 to 123 (AFVG…VSVF), 167 to 187 (VSTS…ALSL), 213 to 235 (RLRA…FRGF), 242 to 262 (LYAV…LIFV), 268 to 288 (SGAA…LLWK), 314 to 334 (LLIG…SLAA), 345 to 365 (QIVL…AIAA), 385 to 405 (LFGV…VLFI), 423 to 443 (IALS…LAFV), 454 to 474 (FGFA…FMLV), and 481 to 503 (LAGI…AWRL).

The protein belongs to the multi antimicrobial extrusion (MATE) (TC 2.A.66.1) family. Expressed in shoots.

It localises to the plastid. The protein localises to the chloroplast membrane. In Arabidopsis thaliana (Mouse-ear cress), this protein is Protein DETOXIFICATION 44, chloroplastic.